The sequence spans 634 residues: Threonine--tRNA ligase (634 aa).

The TGS domain maps to 1-61; the sequence is MINITLPDGS…DHDASLRIIT (61 aa). Positions 243-534 are catalytic; it reads DHRRIGKAQD…LIEHHAGAFP (292 aa). Residues C334, H385, and H511 each contribute to the Zn(2+) site.

Belongs to the class-II aminoacyl-tRNA synthetase family. As to quaternary structure, homodimer. The cofactor is Zn(2+).

The protein localises to the cytoplasm. The catalysed reaction is tRNA(Thr) + L-threonine + ATP = L-threonyl-tRNA(Thr) + AMP + diphosphate + H(+). Its function is as follows. Catalyzes the attachment of threonine to tRNA(Thr) in a two-step reaction: L-threonine is first activated by ATP to form Thr-AMP and then transferred to the acceptor end of tRNA(Thr). Also edits incorrectly charged L-seryl-tRNA(Thr). This Xanthomonas axonopodis pv. citri (strain 306) protein is Threonine--tRNA ligase.